The primary structure comprises 480 residues: Dimethyl-sulfide monooxygenase (480 aa).

FMN-binding residues include Asp58, Thr104, His154, Tyr158, and Ser230. Residues 423–480 (QDSYKPGSLRRKLIGTNDGRVESTHPAAQYRDAYVGKESVADRTQPSPFANAKAPVAE) are disordered.

It belongs to the NtaA/SnaA/DszA monooxygenase family. As to quaternary structure, heterodimer of 2 subunits, DmoA and DmoB. Requires FMN as cofactor.

It carries out the reaction dimethyl sulfide + NADH + O2 + H(+) = methanethiol + formaldehyde + NAD(+) + H2O. Inhibited by umbelliferone, 8-anilinonaphthalenesulfonate, a range of metal-chelating agents, and Hg(2+), Cd(2+) and Pb(2+) ions. Functionally, monooxygenase that mediates oxidation of dimethyl sulfide, the first step in dimethyl sulfide degradation pathway. Has much lower activity with diethyl sulfide and other short-chain alkyl methyl sulfides. In Hyphomicrobium sulfonivorans, this protein is Dimethyl-sulfide monooxygenase (dmoA).